Consider the following 198-residue polypeptide: Large ribosomal subunit protein bL25 (198 aa).

This sequence belongs to the bacterial ribosomal protein bL25 family. CTC subfamily. In terms of assembly, part of the 50S ribosomal subunit; part of the 5S rRNA/L5/L18/L25 subcomplex. Contacts the 5S rRNA. Binds to the 5S rRNA independently of L5 and L18.

Functionally, this is one of the proteins that binds to the 5S RNA in the ribosome where it forms part of the central protuberance. This Lysinibacillus sphaericus (strain C3-41) protein is Large ribosomal subunit protein bL25.